A 248-amino-acid polypeptide reads, in one-letter code: PF03932 family protein CutC (248 aa).

The protein belongs to the CutC family. In terms of assembly, homodimer.

Its subcellular location is the cytoplasm. The chain is PF03932 family protein CutC from Escherichia coli O45:K1 (strain S88 / ExPEC).